The following is an 85-amino-acid chain: Putative membrane protein insertion efficiency factor (85 aa).

Belongs to the UPF0161 family.

It is found in the cell inner membrane. In terms of biological role, could be involved in insertion of integral membrane proteins into the membrane. In Escherichia fergusonii (strain ATCC 35469 / DSM 13698 / CCUG 18766 / IAM 14443 / JCM 21226 / LMG 7866 / NBRC 102419 / NCTC 12128 / CDC 0568-73), this protein is Putative membrane protein insertion efficiency factor.